A 309-amino-acid chain; its full sequence is MKRKIIVGSRRSKLALTQSNWVINKLKEQYPEFDFEIKEIVTKGDRILDVTLSKVGGKGLFVSEVEQALSNSTIDFAVHSMKDVPSSLEEGLVIGAIPKRESPLDCFVFNQVSSLDDLPKGAIVGTSSLRRAAQLLKHRPDFNIRPIRGNIDTRLQKLHVENFDAIILAKAGLARMGWLENTTLKLEDIAPEVCLPAVGQGALAIECRESDQLIRDMLATIHHEETGICVEAERVFLKKLNGGCEIPIAGFATKIGEQIHFKGLVGNADGSKILESKEIGENPGQIGNKVAEVLLSEGAETIIEELRNK.

Cys-244 carries the post-translational modification S-(dipyrrolylmethanemethyl)cysteine.

The protein belongs to the HMBS family. In terms of assembly, monomer. The cofactor is dipyrromethane.

The enzyme catalyses 4 porphobilinogen + H2O = hydroxymethylbilane + 4 NH4(+). It functions in the pathway porphyrin-containing compound metabolism; protoporphyrin-IX biosynthesis; coproporphyrinogen-III from 5-aminolevulinate: step 2/4. Its function is as follows. Tetrapolymerization of the monopyrrole PBG into the hydroxymethylbilane pre-uroporphyrinogen in several discrete steps. In Listeria welshimeri serovar 6b (strain ATCC 35897 / DSM 20650 / CCUG 15529 / CIP 8149 / NCTC 11857 / SLCC 5334 / V8), this protein is Porphobilinogen deaminase.